Consider the following 159-residue polypeptide: Small ribosomal subunit protein uS7 (159 aa).

The protein belongs to the universal ribosomal protein uS7 family. Part of the 30S ribosomal subunit. Contacts proteins S9 and S11.

Its function is as follows. One of the primary rRNA binding proteins, it binds directly to 16S rRNA where it nucleates assembly of the head domain of the 30S subunit. Is located at the subunit interface close to the decoding center, probably blocks exit of the E-site tRNA. This Rickettsia felis (strain ATCC VR-1525 / URRWXCal2) (Rickettsia azadi) protein is Small ribosomal subunit protein uS7.